Here is a 1320-residue protein sequence, read N- to C-terminus: Myopalladin (1320 aa).

An interaction with CARP region spans residues 1 to 522 (MQDDSIEAST…FTCTASNKYG (522 aa)). Disordered stretches follow at residues 19–68 (SYLA…AFLS), 84–145 (NYDP…SETQ), and 165–271 (FKSH…PPRF). Composition is skewed to basic and acidic residues over residues 23-35 (ETRHRGNNERSRA) and 87-106 (PLEKADETQARKRLSPDQMK). Ser-101 bears the Phosphoserine mark. Residues 107–130 (HSPNLSFEPNFCQDNPRSPTSSKE) are compositionally biased toward polar residues. Phosphoserine is present on Ser-131. Residues 168-182 (HSSKRIRPRACKNHK) are compositionally biased toward basic residues. Polar residues predominate over residues 186–201 (ESQNKVMQENSSSFSD). A compositionally biased stretch (basic and acidic residues) spans 218–239 (DTRDNEVNHALEQQEAKRREAE). Positions 219–248 (TRDNEVNHALEQQEAKRREAEQAASEAAGG) form a coiled coil. Residues 240 to 258 (QAASEAAGGDTTPGSSPSS) show a composition bias toward low complexity. A Phosphothreonine modification is found at Thr-251. 2 consecutive Ig-like domains span residues 269–359 (PRFT…IYIE) and 435–531 (PVFT…AQLH). Intrachain disulfides connect Cys-290–Cys-341 and Cys-456–Cys-515. A disordered region spans residues 554-655 (AAIEPQPSPP…VKEPPPVLAK (102 aa)). The segment covering 559–575 (QPSPPHSEPPSVEQPPK) has biased composition (pro residues). Ser-644 carries the post-translational modification Phosphoserine. Residues 649–677 (PPPVLAKPKLDSTQLQQLHNQVLLEQHQL) are interaction with NEB. A Phosphoserine modification is found at Ser-759. The interval 763-805 (LLVSHPSVQTKSPGGLSIQNEPLPPGPTEPTPPPFTFSIPSGN) is disordered. The span at 768 to 782 (PSVQTKSPGGLSIQN) shows a compositional bias: polar residues. Pro residues predominate over residues 784–797 (PLPPGPTEPTPPPF). Phosphoserine occurs at positions 813, 818, 867, 907, and 928. Positions 844-876 (NAMGLPRSAPSMPSQGLAKKNTKSPQPVNDDNI) are disordered. 3 consecutive Ig-like domains span residues 945 to 1029 (PIFD…GRIS), 1073 to 1162 (PHFL…LELS), and 1172 to 1262 (PVIL…ARLD). An interaction with ACTN region spans residues 945–1320 (PIFDKRLKHF…SRSVVESDEL (376 aa)). Cys-1094 and Cys-1146 are joined by a disulfide.

Belongs to the myotilin/palladin family. In terms of assembly, interacts with TTN/titin, NEB, NEBL, ACTN2 and CARP. As to expression, expressed in adult skeletal muscle and fetal heart.

Its subcellular location is the cytoplasm. The protein localises to the nucleus. It is found in the myofibril. It localises to the sarcomere. The protein resides in the z line. Component of the sarcomere that tethers together nebulin (skeletal muscle) and nebulette (cardiac muscle) to alpha-actinin, at the Z lines. The sequence is that of Myopalladin (MYPN) from Homo sapiens (Human).